The sequence spans 149 residues: Nucleoside diphosphate kinase (149 aa).

ATP contacts are provided by Lys-9, Phe-57, Arg-85, Thr-91, Arg-102, and Asn-112. Catalysis depends on His-115, which acts as the Pros-phosphohistidine intermediate.

This sequence belongs to the NDK family. Mg(2+) is required as a cofactor.

It is found in the cytoplasm. It catalyses the reaction a 2'-deoxyribonucleoside 5'-diphosphate + ATP = a 2'-deoxyribonucleoside 5'-triphosphate + ADP. It carries out the reaction a ribonucleoside 5'-diphosphate + ATP = a ribonucleoside 5'-triphosphate + ADP. Major role in the synthesis of nucleoside triphosphates other than ATP. The ATP gamma phosphate is transferred to the NDP beta phosphate via a ping-pong mechanism, using a phosphorylated active-site intermediate. This Methanococcoides burtonii (strain DSM 6242 / NBRC 107633 / OCM 468 / ACE-M) protein is Nucleoside diphosphate kinase.